A 330-amino-acid chain; its full sequence is Beta-ketoacyl-[acyl-carrier-protein] synthase III (330 aa).

Residues C116 and H257 contribute to the active site. The interval 258–262 (QANQR) is ACP-binding. N287 is an active-site residue.

This sequence belongs to the thiolase-like superfamily. FabH family. Homodimer.

It is found in the cytoplasm. The enzyme catalyses malonyl-[ACP] + acetyl-CoA + H(+) = 3-oxobutanoyl-[ACP] + CO2 + CoA. Its pathway is lipid metabolism; fatty acid biosynthesis. Its function is as follows. Catalyzes the condensation reaction of fatty acid synthesis by the addition to an acyl acceptor of two carbons from malonyl-ACP. Catalyzes the first condensation reaction which initiates fatty acid synthesis and may therefore play a role in governing the total rate of fatty acid production. Possesses both acetoacetyl-ACP synthase and acetyl transacylase activities. Its substrate specificity determines the biosynthesis of branched-chain and/or straight-chain of fatty acids. The protein is Beta-ketoacyl-[acyl-carrier-protein] synthase III of Synechocystis sp. (strain ATCC 27184 / PCC 6803 / Kazusa).